Consider the following 158-residue polypeptide: MGINYSVKADPETTARGMLRDRPISLKHSKAIAREIKGMTIADAESYLDDVIAQRQSVPFRQHNSGVGHRSDIDGWDAGRYPEKASKAFLELIENVASNANEQGFDGNAMAIRHVAAHKVGERQGRKPRAFGSADPWNTTICDVELIIEQPGTDGVDI.

This sequence belongs to the universal ribosomal protein uL22 family. As to quaternary structure, part of the 50S ribosomal subunit.

In terms of biological role, this protein binds specifically to 23S rRNA. It makes multiple contacts with different domains of the 23S rRNA in the assembled 50S subunit and ribosome. Functionally, the globular domain of the protein is located near the polypeptide exit tunnel on the outside of the subunit, while an extended beta-hairpin is found that lines the wall of the exit tunnel in the center of the 70S ribosome. In Haloquadratum walsbyi (strain DSM 16790 / HBSQ001), this protein is Large ribosomal subunit protein uL22.